Reading from the N-terminus, the 161-residue chain is Cytochrome c-type biogenesis protein CcmE (161 aa).

Topologically, residues 1–8 (MNPRRKKR) are cytoplasmic. A helical; Signal-anchor for type II membrane protein membrane pass occupies residues 9 to 29 (LGLILALFVGISATVGLMLYA). The Periplasmic segment spans residues 30-161 (LNQNMDLFYT…TEQQKQGTGQ (132 aa)). Heme is bound by residues His-129 and Tyr-133. Residues 142–161 (MKKTHEPLQYTEQQKQGTGQ) form a disordered region. Polar residues predominate over residues 151–161 (YTEQQKQGTGQ).

Belongs to the CcmE/CycJ family.

It localises to the cell inner membrane. Functionally, heme chaperone required for the biogenesis of c-type cytochromes. Transiently binds heme delivered by CcmC and transfers the heme to apo-cytochromes in a process facilitated by CcmF and CcmH. This is Cytochrome c-type biogenesis protein CcmE from Aliivibrio fischeri (strain MJ11) (Vibrio fischeri).